The chain runs to 449 residues: Integrator complex subunit 15 (449 aa).

The protein belongs to the Integrator subunit 15 family. As to quaternary structure, component of the Integrator complex, composed of core subunits INTS1, INTS2, INTS3, INTS4, INTS5, INTS6, INTS7, INTS8, INTS9/RC74, INTS10, INTS11/CPSF3L, INTS12, INTS13, INTS14 and INTS15. The core complex associates with protein phosphatase 2A subunits PPP2CA and PPP2R1A, to form the Integrator-PP2A (INTAC) complex. INTS15 is part of the tail subcomplex, composed of INTS10, INTS13, INTS14 and INTS15.

It is found in the nucleus. The protein resides in the chromosome. Component of the integrator complex, a multiprotein complex that terminates RNA polymerase II (Pol II) transcription in the promoter-proximal region of genes. The integrator complex provides a quality checkpoint during transcription elongation by driving premature transcription termination of transcripts that are unfavorably configured for transcriptional elongation: the complex terminates transcription by (1) catalyzing dephosphorylation of the C-terminal domain (CTD) of Pol II subunit POLR2A/RPB1 and SUPT5H/SPT5, (2) degrading the exiting nascent RNA transcript via endonuclease activity and (3) promoting the release of Pol II from bound DNA. The integrator complex is also involved in terminating the synthesis of non-coding Pol II transcripts, such as enhancer RNAs (eRNAs), small nuclear RNAs (snRNAs), telomerase RNAs and long non-coding RNAs (lncRNAs). INTS15 is part of the integrator tail module that acts as a platform for the recruitment of transcription factors at promoters. Within the integrator complex, INTS15 is required to bridge different integrator modules. The protein is Integrator complex subunit 15 of Homo sapiens (Human).